Reading from the N-terminus, the 356-residue chain is GTPase Obg (356 aa).

The region spanning Met-1–Leu-159 is the Obg domain. Residues Ala-160–Glu-331 enclose the OBG-type G domain. GTP-binding positions include Gly-166–Ser-173, Phe-191–Val-195, Asp-213–Gly-216, Ser-283–Asp-286, and Ser-312–Val-314. Mg(2+) is bound by residues Ser-173 and Thr-193.

The protein belongs to the TRAFAC class OBG-HflX-like GTPase superfamily. OBG GTPase family. In terms of assembly, monomer. It depends on Mg(2+) as a cofactor.

It is found in the cytoplasm. In terms of biological role, an essential GTPase which binds GTP, GDP and possibly (p)ppGpp with moderate affinity, with high nucleotide exchange rates and a fairly low GTP hydrolysis rate. Plays a role in control of the cell cycle, stress response, ribosome biogenesis and in those bacteria that undergo differentiation, in morphogenesis control. The protein is GTPase Obg of Syntrophotalea carbinolica (strain DSM 2380 / NBRC 103641 / GraBd1) (Pelobacter carbinolicus).